A 937-amino-acid polypeptide reads, in one-letter code: ABC transporter A family member 4 (937 aa).

7 helical membrane-spanning segments follow: residues 34 to 54, 340 to 360, 394 to 414, 423 to 443, 455 to 475, 478 to 498, and 528 to 548; these read LIVI…LFDT, IASV…FPVI, FLAI…AIGL, SIQF…AFLV, VAAY…FQFM, GLSF…FSLY, and AMDE…IAAY. One can recognise an ABC transporter domain in the interval 618–852; sequence DKLKKVYPGR…YGGSYVLTMT (235 aa). 653–660 provides a ligand contact to ATP; that stretch reads GPNGAGKT.

This sequence belongs to the ABC transporter superfamily. ABCA family. CPR flippase (TC 3.A.1.211) subfamily.

The protein resides in the membrane. The chain is ABC transporter A family member 4 (ABCA4) from Arabidopsis thaliana (Mouse-ear cress).